The following is a 150-amino-acid chain: Putative pre-16S rRNA nuclease (150 aa).

It belongs to the YqgF nuclease family.

It localises to the cytoplasm. Functionally, could be a nuclease involved in processing of the 5'-end of pre-16S rRNA. This chain is Putative pre-16S rRNA nuclease, found in Syntrophus aciditrophicus (strain SB).